The primary structure comprises 644 residues: Macrolide export ATP-binding/permease protein MacB (644 aa).

Residues 4 to 242 (IECKNINRCF…SNVGRIREKA (239 aa)) enclose the ABC transporter domain. 40–47 (GQSGSGKS) contacts ATP. The next 4 membrane-spanning stretches (helical) occupy residues 270–290 (LLTMLGIIIGIASVVSVVALG), 524–544 (IALISLVVGGIGVMNIMLVSV), 574–594 (LICIIGGLVGVGLSAAVSLVF), and 607–627 (AASVIGAVACSTGIGIAFGFM).

It belongs to the ABC transporter superfamily. Macrolide exporter (TC 3.A.1.122) family. As to quaternary structure, homodimer.

The protein localises to the cell inner membrane. In terms of biological role, non-canonical ABC transporter that contains transmembrane domains (TMD), which form a pore in the inner membrane, and an ATP-binding domain (NBD), which is responsible for energy generation. Confers resistance against macrolides. In Neisseria gonorrhoeae (strain ATCC 700825 / FA 1090), this protein is Macrolide export ATP-binding/permease protein MacB.